A 226-amino-acid chain; its full sequence is Small ribosomal subunit protein uS2c (226 aa).

The protein belongs to the universal ribosomal protein uS2 family.

It localises to the plastid. The protein resides in the chloroplast. This Phaeodactylum tricornutum (strain CCAP 1055/1) protein is Small ribosomal subunit protein uS2c (rps2).